The following is a 112-amino-acid chain: Large ribosomal subunit protein uL22 (112 aa).

This sequence belongs to the universal ribosomal protein uL22 family. In terms of assembly, part of the 50S ribosomal subunit.

In terms of biological role, this protein binds specifically to 23S rRNA; its binding is stimulated by other ribosomal proteins, e.g. L4, L17, and L20. It is important during the early stages of 50S assembly. It makes multiple contacts with different domains of the 23S rRNA in the assembled 50S subunit and ribosome. Its function is as follows. The globular domain of the protein is located near the polypeptide exit tunnel on the outside of the subunit, while an extended beta-hairpin is found that lines the wall of the exit tunnel in the center of the 70S ribosome. This chain is Large ribosomal subunit protein uL22, found in Nitratidesulfovibrio vulgaris (strain ATCC 29579 / DSM 644 / CCUG 34227 / NCIMB 8303 / VKM B-1760 / Hildenborough) (Desulfovibrio vulgaris).